The chain runs to 268 residues: 4-hydroxy-tetrahydrodipicolinate reductase (268 aa).

Residues 7 to 12 and Glu-33 each bind NAD(+); that span reads GAGGRM. Arg-34 lines the NADP(+) pocket. Residues 97–99 and 121–124 each bind NAD(+); these read GTT and SGNM. His-155 functions as the Proton donor/acceptor in the catalytic mechanism. A (S)-2,3,4,5-tetrahydrodipicolinate-binding site is contributed by His-156. Residue Lys-159 is the Proton donor of the active site. 165–166 is a binding site for (S)-2,3,4,5-tetrahydrodipicolinate; sequence GT.

It belongs to the DapB family.

The protein localises to the cytoplasm. The enzyme catalyses (S)-2,3,4,5-tetrahydrodipicolinate + NAD(+) + H2O = (2S,4S)-4-hydroxy-2,3,4,5-tetrahydrodipicolinate + NADH + H(+). It carries out the reaction (S)-2,3,4,5-tetrahydrodipicolinate + NADP(+) + H2O = (2S,4S)-4-hydroxy-2,3,4,5-tetrahydrodipicolinate + NADPH + H(+). It participates in amino-acid biosynthesis; L-lysine biosynthesis via DAP pathway; (S)-tetrahydrodipicolinate from L-aspartate: step 4/4. Catalyzes the conversion of 4-hydroxy-tetrahydrodipicolinate (HTPA) to tetrahydrodipicolinate. The polypeptide is 4-hydroxy-tetrahydrodipicolinate reductase (Brucella melitensis biotype 1 (strain ATCC 23456 / CCUG 17765 / NCTC 10094 / 16M)).